The following is a 92-amino-acid chain: UPF0223 protein SMU_1141c (92 aa).

Belongs to the UPF0223 family.

The sequence is that of UPF0223 protein SMU_1141c from Streptococcus mutans serotype c (strain ATCC 700610 / UA159).